The sequence spans 428 residues: Tyrosine--tRNA ligase (428 aa).

An L-tyrosine-binding site is contributed by Tyr41. The short motif at 46 to 55 (PTADSLHLGH) is the 'HIGH' region element. L-tyrosine contacts are provided by Tyr179 and Gln183. The short motif at 239–243 (KFGKT) is the 'KMSKS' region element. ATP is bound at residue Lys242. One can recognise an S4 RNA-binding domain in the interval 361–418 (ADLMQALVDSELQPSRGQARKTIASNAVTINGEKQSDPEYFFQDSDILFGRYTLLRRG).

Belongs to the class-I aminoacyl-tRNA synthetase family. TyrS type 1 subfamily. In terms of assembly, homodimer.

It localises to the cytoplasm. The catalysed reaction is tRNA(Tyr) + L-tyrosine + ATP = L-tyrosyl-tRNA(Tyr) + AMP + diphosphate + H(+). Catalyzes the attachment of tyrosine to tRNA(Tyr) in a two-step reaction: tyrosine is first activated by ATP to form Tyr-AMP and then transferred to the acceptor end of tRNA(Tyr). The polypeptide is Tyrosine--tRNA ligase (Citrobacter koseri (strain ATCC BAA-895 / CDC 4225-83 / SGSC4696)).